Reading from the N-terminus, the 402-residue chain is Secondary metabolism regulator laeA (402 aa).

Positions methionine 1–aspartate 70 are disordered. The segment covering serine 11–cysteine 21 has biased composition (acidic residues).

The protein belongs to the methyltransferase superfamily. LaeA methyltransferase family.

It is found in the nucleus. The catalysed reaction is L-methionyl-[protein] + S-adenosyl-L-methionine = S-methyl-L-methionyl-[protein] + S-adenosyl-L-homocysteine. In terms of biological role, methyltransferase that performs automethylation. No other methyl-accepting substrate has been identified yet. Acts as a global regulator for secondary metabolite gene expression. Negatively regulates the production of coprinoferrin, a structurally novel acylated tripeptide hydroxamate siderophore. The polypeptide is Secondary metabolism regulator laeA (Coprinopsis cinerea (strain Okayama-7 / 130 / ATCC MYA-4618 / FGSC 9003) (Inky cap fungus)).